The primary structure comprises 325 residues: MHPTAARTGVLLINLGTPEAPTPKAVRRYLREFLSDPRVVEIPRVLWWPILNLVVLRTRSRKSAHAYRTIWTERGSPLLAYTQDLRDRLAADGRFAAVEIAMRYGNPSVRLKLEELRNRVETIVVLPLYPQYSAATTGSAFDAVCDTLKTWRHIPSLHFIGDYHRSPKYLEAVAASIRSFWQEHGRPERLVFSFHGLPKCCIDRGDPYASQCQATAQGIARLLELSDDEWLLTYQSRFGRAEWLRPYCIDTLRELPSQGIRHVDVVCPGFAVDCLETLEEIAIANRNEFLGAGGKNYRYIPALNASPAHADILIGLLEPYLALTA.

Residues His-195 and Glu-276 each coordinate Fe cation.

It belongs to the ferrochelatase family.

The protein resides in the cytoplasm. The enzyme catalyses heme b + 2 H(+) = protoporphyrin IX + Fe(2+). The protein operates within porphyrin-containing compound metabolism; protoheme biosynthesis; protoheme from protoporphyrin-IX: step 1/1. In terms of biological role, catalyzes the ferrous insertion into protoporphyrin IX. The protein is Ferrochelatase of Methylococcus capsulatus (strain ATCC 33009 / NCIMB 11132 / Bath).